Consider the following 382-residue polypeptide: UDP-N-acetylglucosamine--N-acetylmuramyl-(pentapeptide) pyrophosphoryl-undecaprenol N-acetylglucosamine transferase (382 aa).

Residues 22–24 (TGG), Asn-134, Arg-186, Ser-212, 285–290 (ALTVAE), and Gln-311 contribute to the UDP-N-acetyl-alpha-D-glucosamine site.

It belongs to the glycosyltransferase 28 family. MurG subfamily.

The protein resides in the cell inner membrane. The catalysed reaction is di-trans,octa-cis-undecaprenyl diphospho-N-acetyl-alpha-D-muramoyl-L-alanyl-D-glutamyl-meso-2,6-diaminopimeloyl-D-alanyl-D-alanine + UDP-N-acetyl-alpha-D-glucosamine = di-trans,octa-cis-undecaprenyl diphospho-[N-acetyl-alpha-D-glucosaminyl-(1-&gt;4)]-N-acetyl-alpha-D-muramoyl-L-alanyl-D-glutamyl-meso-2,6-diaminopimeloyl-D-alanyl-D-alanine + UDP + H(+). The protein operates within cell wall biogenesis; peptidoglycan biosynthesis. In terms of biological role, cell wall formation. Catalyzes the transfer of a GlcNAc subunit on undecaprenyl-pyrophosphoryl-MurNAc-pentapeptide (lipid intermediate I) to form undecaprenyl-pyrophosphoryl-MurNAc-(pentapeptide)GlcNAc (lipid intermediate II). This Pseudoalteromonas atlantica (strain T6c / ATCC BAA-1087) protein is UDP-N-acetylglucosamine--N-acetylmuramyl-(pentapeptide) pyrophosphoryl-undecaprenol N-acetylglucosamine transferase.